The primary structure comprises 795 residues: Phenylalanine--tRNA ligase beta subunit (795 aa).

Positions 39-148 (AAEFNGVVIG…LDAPLGTDLR (110 aa)) constitute a tRNA-binding domain. Positions 401-476 (PKPAQILLRR…RIYGYNNIPN (76 aa)) constitute a B5 domain. Residues Asp454, Asp460, Glu463, and Glu464 each contribute to the Mg(2+) site. Positions 701–794 (SKFPANRRDI…LKTEFNASLR (94 aa)) constitute an FDX-ACB domain.

This sequence belongs to the phenylalanyl-tRNA synthetase beta subunit family. Type 1 subfamily. Tetramer of two alpha and two beta subunits. Requires Mg(2+) as cofactor.

The protein resides in the cytoplasm. The catalysed reaction is tRNA(Phe) + L-phenylalanine + ATP = L-phenylalanyl-tRNA(Phe) + AMP + diphosphate + H(+). In Shewanella oneidensis (strain ATCC 700550 / JCM 31522 / CIP 106686 / LMG 19005 / NCIMB 14063 / MR-1), this protein is Phenylalanine--tRNA ligase beta subunit.